We begin with the raw amino-acid sequence, 150 residues long: Ribonuclease K6 (150 aa).

The first 23 residues, 1–23, serve as a signal peptide directing secretion; the sequence is MVLCFPLLLLLLVLWGPVCLLHA. H38 functions as the Proton acceptor in the catalytic mechanism. Cystine bridges form between C46–C104, C60–C114, C78–C129, and C85–C92. Residue N55 is glycosylated (N-linked (GlcNAc...) asparagine). Substrate is bound by residues 61–65 and K86; that span reads KHQNT. Residue N100 is glycosylated (N-linked (GlcNAc...) asparagine). R105 is a binding site for substrate. The active-site Proton donor is the H145.

It belongs to the pancreatic ribonuclease family. In terms of assembly, interacts (via N-terminus) with bacterial lipopolysaccharide (LPS).

It is found in the secreted. Its subcellular location is the lysosome. The protein resides in the cytoplasmic granule. Its function is as follows. Ribonuclease which shows a preference for the pyrimidines uridine and cytosine. Has potent antibacterial activity against a range of Gram-positive and Gram-negative bacteria, including P.aeruginosa, A.baumanii, M.luteus, S.aureus, E.faecalis, E.faecium, S.saprophyticus and E.coli. Causes loss of bacterial membrane integrity, and also promotes agglutination of Gram-negative bacteria. Probably contributes to urinary tract sterility. Bactericidal activity is independent of RNase activity. The polypeptide is Ribonuclease K6 (RNASE6) (Chlorocebus aethiops (Green monkey)).